The following is a 317-amino-acid chain: Tumor necrosis factor ligand superfamily member 11 (317 aa).

Over residues 1–16 (MRRASRDYTKYLRGSE) the composition is skewed to basic and acidic residues. The tract at residues 1–43 (MRRASRDYTKYLRGSEEMGGGPGAPHEGPLHAPPPPAPHQPPA) is disordered. Residues 1–47 (MRRASRDYTKYLRGSEEMGGGPGAPHEGPLHAPPPPAPHQPPAASRS) are Cytoplasmic-facing. The span at 31–41 (HAPPPPAPHQP) shows a compositional bias: pro residues. A helical; Signal-anchor for type II membrane protein membrane pass occupies residues 48–68 (MFVALLGLGLGQVVCSVALFF). Over 69–317 (YFRAQMDPNR…FGAFKVRDID (249 aa)) the chain is Extracellular. Positions 164–313 (PFAHLTINAT…DATYFGAFKV (150 aa)) constitute a THD domain. N-linked (GlcNAc...) asparagine glycosylation is found at N171 and N198.

Belongs to the tumor necrosis factor family. As to quaternary structure, homotrimer. Interacts with TNFRSF11B. Interacts with TNFRSF11A. Interacts with FBN1 (via N-terminal domain) in a Ca(+2)-dependent manner. Interacts with TNFAIP6 (via both Link and CUB domains). In terms of processing, the soluble form of isoform 1 derives from the membrane form by proteolytic processing. The cleavage may be catalyzed by ADAM17. In terms of tissue distribution, highest in the peripheral lymph nodes, weak in spleen, peripheral blood Leukocytes, bone marrow, heart, placenta, skeletal muscle, stomach and thyroid.

Its subcellular location is the cell membrane. It localises to the cytoplasm. It is found in the secreted. Cytokine that binds to TNFRSF11B/OPG and to TNFRSF11A/RANK. Osteoclast differentiation and activation factor. Augments the ability of dendritic cells to stimulate naive T-cell proliferation. May be an important regulator of interactions between T-cells and dendritic cells and may play a role in the regulation of the T-cell-dependent immune response. May also play an important role in enhanced bone-resorption in humoral hypercalcemia of malignancy. Induces osteoclastogenesis by activating multiple signaling pathways in osteoclast precursor cells, chief among which is induction of long lasting oscillations in the intracellular concentration of Ca (2+) resulting in the activation of NFATC1, which translocates to the nucleus and induces osteoclast-specific gene transcription to allow differentiation of osteoclasts. During osteoclast differentiation, in a TMEM64 and ATP2A2-dependent manner induces activation of CREB1 and mitochondrial ROS generation necessary for proper osteoclast generation. This is Tumor necrosis factor ligand superfamily member 11 (TNFSF11) from Homo sapiens (Human).